The primary structure comprises 225 residues: Uridylate kinase (225 aa).

Gly9–Ser10 contacts ATP. Gly43 provides a ligand contact to UMP. ATP contacts are provided by Gly44 and Arg48. UMP-binding positions include Asp65 and Thr113–Thr119. Positions 139, 145, and 148 each coordinate ATP.

It belongs to the UMP kinase family. Homohexamer.

It localises to the cytoplasm. The enzyme catalyses UMP + ATP = UDP + ADP. It participates in pyrimidine metabolism; CTP biosynthesis via de novo pathway; UDP from UMP (UMPK route): step 1/1. With respect to regulation, inhibited by UTP. In terms of biological role, catalyzes the reversible phosphorylation of UMP to UDP. The polypeptide is Uridylate kinase (Methanobrevibacter smithii (strain ATCC 35061 / DSM 861 / OCM 144 / PS)).